A 239-amino-acid chain; its full sequence is UDP-2,3-diacylglucosamine hydrolase (239 aa).

Residues aspartate 8, histidine 10, aspartate 41, asparagine 79, and histidine 114 each coordinate Mn(2+). 79–80 (NR) is a substrate binding site. The substrate site is built by aspartate 122, serine 160, asparagine 164, lysine 167, and histidine 195. Residues histidine 195 and histidine 197 each coordinate Mn(2+).

It belongs to the LpxH family. It depends on Mn(2+) as a cofactor.

It localises to the cell inner membrane. It catalyses the reaction UDP-2-N,3-O-bis[(3R)-3-hydroxytetradecanoyl]-alpha-D-glucosamine + H2O = 2-N,3-O-bis[(3R)-3-hydroxytetradecanoyl]-alpha-D-glucosaminyl 1-phosphate + UMP + 2 H(+). It functions in the pathway glycolipid biosynthesis; lipid IV(A) biosynthesis; lipid IV(A) from (3R)-3-hydroxytetradecanoyl-[acyl-carrier-protein] and UDP-N-acetyl-alpha-D-glucosamine: step 4/6. Functionally, hydrolyzes the pyrophosphate bond of UDP-2,3-diacylglucosamine to yield 2,3-diacylglucosamine 1-phosphate (lipid X) and UMP by catalyzing the attack of water at the alpha-P atom. Involved in the biosynthesis of lipid A, a phosphorylated glycolipid that anchors the lipopolysaccharide to the outer membrane of the cell. The polypeptide is UDP-2,3-diacylglucosamine hydrolase (Sodalis glossinidius (strain morsitans)).